An 896-amino-acid chain; its full sequence is Probable sodium/sulfate cotransporter 3 (896 aa).

5 helical membrane-spanning segments follow: residues 1–21 (MAAIGWPGIVAIISVAISFII), 47–69 (IITVAKAAAGYGNTGLLTVIFLY), 106–126 (VMVLSAFLNNTPCVTFMIPIL), 140–160 (LLIPLSYAAVLGGTCTSIGTS), and 186–206 (MFDIAPYGVPYALMGFVFIIL). RCK C-terminal domains lie at 212–296 (LPGN…EFGL), 319–404 (TAFH…FKIN), 408–493 (LRFV…FPGL), and 499–586 (EQVD…KAFV). The next 7 membrane-spanning stretches (helical) occupy residues 602 to 622 (MAIGVLLVVGMVLTQIVGGLK), 626 to 646 (YIHLWPAAVLTAALMLLTGCM), 654 to 674 (AIMWDVYLTIAAAFGVSAALE), 685 to 705 (AIISIGKSIGGDGPALIAIYV), 734 to 754 (LKIPAVDISVAIMLGASAGFI), 776 to 796 (FATIGAPFQIWLMVVASFILC), and 804 to 824 (VWIATWSITAFIVFVPALLTL). The interval 857–881 (RAQSFGGKAMSVGSTESRTDGSSTP) is disordered. Polar residues predominate over residues 868 to 881 (VGSTESRTDGSSTP).

It belongs to the divalent anion:Na+ symporter (DASS) superfamily. Na+/sulfate symporter (TC 2.A.47.4) family.

It is found in the cell membrane. Functionally, na(+)/sulfate cotransporter with a probable low-affinity for sulfate. In Chlamydomonas reinhardtii (Chlamydomonas smithii), this protein is Probable sodium/sulfate cotransporter 3 (SLT3).